The chain runs to 645 residues: Dictomallein-like protein (645 aa).

The signal sequence occupies residues 1–13 (MKLSMVMVLLVLA). A disordered region spans residues 19–55 (CGGNDDNNSERTHESGDSNGDVTTPDNDASSNDEDDA). One can recognise a Peptidase M66 domain in the interval 177 to 448 (PALHPELDLT…QRWVRNRARM (272 aa)). Zn(2+) is bound at residue H333. Residue E334 is part of the active site. H337 and H343 together coordinate Zn(2+).

Belongs to the dictomallein family. It depends on Zn(2+) as a cofactor.

The protein localises to the secreted. The sequence is that of Dictomallein-like protein (dtmL) from Hahella chejuensis (strain KCTC 2396).